The sequence spans 540 residues: Probable protein kinase UbiB (540 aa).

A helical transmembrane segment spans residues 24-44; the sequence is LLFDQPLLPWWLASLRLLMPW. One can recognise a Protein kinase domain in the interval 126 to 494; sequence RFDVEPLASA…RRRQGDRWAL (369 aa). Residues 132-140 and Lys-154 contribute to the ATP site; that span reads LASASVAQV. Asp-289 functions as the Proton acceptor in the catalytic mechanism. Transmembrane regions (helical) follow at residues 496 to 516 and 518 to 538; these read LLGA…AETA and LAAP…YLIV.

It belongs to the ABC1 family. UbiB subfamily.

The protein resides in the cell inner membrane. Its pathway is cofactor biosynthesis; ubiquinone biosynthesis [regulation]. Functionally, is probably a protein kinase regulator of UbiI activity which is involved in aerobic coenzyme Q (ubiquinone) biosynthesis. This Pseudomonas putida (strain ATCC 700007 / DSM 6899 / JCM 31910 / BCRC 17059 / LMG 24140 / F1) protein is Probable protein kinase UbiB.